The primary structure comprises 140 residues: Auxin-responsive protein IAA26 (140 aa).

The interval 1-40 is disordered; the sequence is MASYGDDGVELTELTLGPPGASARRARRGRKNGHPPPSSS. An EAR-like (transcriptional repression) motif is present at residues 14–18; the sequence is LTLGP. Basic residues predominate over residues 24 to 33; the sequence is RRARRGRKNG. A PB1 domain is found at 45–130; sequence AYFVKVSMDG…SCKRMRVMRA (86 aa).

Belongs to the Aux/IAA family. In terms of assembly, homodimers and heterodimers. As to expression, expressed in roots, seedlings and flowers.

The protein resides in the nucleus. Aux/IAA proteins are short-lived transcriptional factors that function as repressors of early auxin response genes at low auxin concentrations. This chain is Auxin-responsive protein IAA26 (IAA26), found in Oryza sativa subsp. japonica (Rice).